Reading from the N-terminus, the 428-residue chain is Aspartate--tRNA(Asp) ligase (428 aa).

Residue E170 coordinates L-aspartate. The aspartate stretch occupies residues 192 to 195 (QLYK). R213 lines the L-aspartate pocket. ATP contacts are provided by residues 213–215 (RAE) and E351. E351 and S354 together coordinate Mg(2+). Positions 354 and 358 each coordinate L-aspartate. 399–402 (GFNR) contacts ATP.

The protein belongs to the class-II aminoacyl-tRNA synthetase family. Type 2 subfamily. Homodimer. Mg(2+) is required as a cofactor.

It localises to the cytoplasm. The catalysed reaction is tRNA(Asp) + L-aspartate + ATP = L-aspartyl-tRNA(Asp) + AMP + diphosphate. Its function is as follows. Catalyzes the attachment of L-aspartate to tRNA(Asp) in a two-step reaction: L-aspartate is first activated by ATP to form Asp-AMP and then transferred to the acceptor end of tRNA(Asp). The chain is Aspartate--tRNA(Asp) ligase from Pyrobaculum aerophilum (strain ATCC 51768 / DSM 7523 / JCM 9630 / CIP 104966 / NBRC 100827 / IM2).